The sequence spans 376 residues: Actin-related protein T1 (376 aa).

This sequence belongs to the actin family.

It is found in the cytoplasm. The protein resides in the cytoskeleton. Its subcellular location is the nucleus. The protein localises to the cytoplasmic vesicle. It localises to the secretory vesicle. It is found in the acrosome. Negatively regulates the Hedgehog (SHH) signaling. Binds to the promoter of the SHH signaling mediator, GLI1, and inhibits its expression. The polypeptide is Actin-related protein T1 (Actrt1) (Mus musculus (Mouse)).